The chain runs to 566 residues: Mucolipin-2 (566 aa).

Over 1 to 65 the chain is Cytoplasmic; the sequence is MARQPYRFPQ…YRARRQIPWK (65 aa). A helical membrane pass occupies residues 66–86; sequence LGLQILKIVMVTTQLVRFGLS. Residues 87–288 are Extracellular-facing; the sequence is NQLVVAFKED…IFGSTQKNAQ (202 aa). The segment at 107 to 123 is extracellular/lumenal pore loop; that stretch reads KGYSGTDEDDYSCSVYT. Disulfide bonds link Cys-164–Cys-190 and Cys-243–Cys-274. A helical transmembrane segment spans residues 289–309; sequence YVLVFDAFVIVICLASLILCT. The Cytoplasmic segment spans residues 310–346; sequence RSIVLALRLRKRFLNFFLEKYKRPVCDTDQWEFINGW. The helical transmembrane segment at 347–367 threads the bilayer; sequence YVLVIISDLMTIIGSILKMEI. The Extracellular portion of the chain corresponds to 368-376; it reads KAKNLTNYD. A helical transmembrane segment spans residues 377 to 397; the sequence is LCSIFLGTSTLLVWVGVIRYL. The Cytoplasmic segment spans residues 398–419; the sequence is GYFQAYNVLILTMQASLPKVLR. Residues 420 to 440 traverse the membrane as a helical segment; it reads FCACAGMIYLGYTFCGWIVLG. Residues 441-448 are Extracellular-facing; that stretch reads PYHDKFEN. The pore-forming intramembrane region spans 449-469; sequence LNTVAECLFSLVNGDDMFATF. A Selectivity filter motif is present at residues 461–464; that stretch reads NGDD. The Extracellular portion of the chain corresponds to 470–480; the sequence is AQIQQKSILVW. The chain crosses the membrane as a helical span at residues 481 to 502; it reads LFSRLYLYSFISLFIYMILSLF. At 503 to 566 the chain is on the cytoplasmic side; sequence IALITDSYDT…RSDDHLIPIS (64 aa).

This sequence belongs to the transient receptor (TC 1.A.4) family. Polycystin subfamily. MCOLN2 sub-subfamily. In terms of assembly, forms homooligomeric complexes; probably tetrameric. Can heterooligomerize with MCOLN1; heteromeric assemblies have different channel properties as compared to the respective homooligomers and may be tissue-specific. Interacts with TMEM176A.

The protein resides in the cell membrane. It localises to the late endosome membrane. Its subcellular location is the lysosome membrane. It is found in the recycling endosome membrane. The enzyme catalyses Ca(2+)(in) = Ca(2+)(out). It catalyses the reaction Fe(2+)(in) = Fe(2+)(out). With respect to regulation, channel activity is reduced by low extracellular/lumenal pH level. Functionally, nonselective cation channel probably playing a role in the regulation of membrane trafficking events. Acts as a Ca(2+)-permeable cation channel with inwardly rectifying activity. May activate ARF6 and be involved in the trafficking of GPI-anchored cargo proteins to the cell surface via the ARF6-regulated recycling pathway. May play a role in immune processes. In adaptive immunity, TRPML2 and TRPML1 may play redundant roles in the function of the specialized lysosomes of B cells. In the innate immune response, may play a role in the regulation of chemokine secretion and macrophage migration. Through a possible and probably tissue-specific heteromerization with MCOLN1 may be at least in part involved in many lysosome-dependent cellular events. Also functions as a Fe(2+) permeable channel. The polypeptide is Mucolipin-2 (Homo sapiens (Human)).